A 318-amino-acid chain; its full sequence is MILELIIVLVLLVLAFKSLKILRPYEKGVVERLGKYQRTVESGLVVIIPFIEAIKKVDMREQVVDVPPQEVITKDNTVVVVDCVIFYEVVDPFNAVYNVVDFYQAITKLAQTNLRNIIGDLELDQTLTSREMINTQLREVLDEATDKWGTRVVRVEIQRIEPPGDIVEAMSKQMKAERMKRAAILEAEGYKQSEIKRAEGDKQAAILEAEGKAEAIKKVADANKYREIAIAEGQAKAILSVFRAMHEGDPTNDIIALKYLEALEKVADGRATKILLPVEATGILGSIAGISEMLSDPEDKGVSEVETESQPAEKPEKH.

Residues Ile2–Leu22 form a helical membrane-spanning segment. The segment at Ser295 to His318 is disordered.

Belongs to the band 7/mec-2 family.

It is found in the membrane. This is an uncharacterized protein from Methanothermobacter thermautotrophicus (strain ATCC 29096 / DSM 1053 / JCM 10044 / NBRC 100330 / Delta H) (Methanobacterium thermoautotrophicum).